A 239-amino-acid chain; its full sequence is Small ribosomal subunit protein uS3 (239 aa).

The KH type-2 domain occupies 39 to 107 (IRAALMKTLK…EVLINIVEVR (69 aa)). Residues 214 to 239 (AQDKKMAEQDHGGGGGDRRRRDRDAA) are disordered.

The protein belongs to the universal ribosomal protein uS3 family. As to quaternary structure, part of the 30S ribosomal subunit. Forms a tight complex with proteins S10 and S14.

Binds the lower part of the 30S subunit head. Binds mRNA in the 70S ribosome, positioning it for translation. The chain is Small ribosomal subunit protein uS3 from Methylocella silvestris (strain DSM 15510 / CIP 108128 / LMG 27833 / NCIMB 13906 / BL2).